The following is a 154-amino-acid chain: Protein MGF 300-2R (154 aa).

Belongs to the asfivirus MGF 300 family.

In terms of biological role, plays a role in virus cell tropism, and may be required for efficient virus replication in macrophages. This chain is Protein MGF 300-2R, found in Ornithodoros (relapsing fever ticks).